Here is a 159-residue protein sequence, read N- to C-terminus: Transcriptional repressor NrdR (159 aa).

A zinc finger lies at 3-34 (CPFCRHEDTQVVDSRVSEDGAAIRRRRRCSAC). The 91-residue stretch at 49 to 139 (PAVVKKDGSR…VYRRFEDVSE (91 aa)) folds into the ATP-cone domain.

It belongs to the NrdR family. Zn(2+) is required as a cofactor.

Its function is as follows. Negatively regulates transcription of bacterial ribonucleotide reductase nrd genes and operons by binding to NrdR-boxes. This chain is Transcriptional repressor NrdR, found in Burkholderia vietnamiensis (strain G4 / LMG 22486) (Burkholderia cepacia (strain R1808)).